We begin with the raw amino-acid sequence, 495 residues long: Transcription termination/antitermination protein NusA (495 aa).

Positions 135-200 (GEIITGVVKK…RGAQLFVTRS (66 aa)) constitute an S1 motif domain. A KH domain is found at 302–368 (KHTMDIAVEA…FTKYLDIDED (67 aa)). 2 repeat units span residues 364–414 (DIDE…KNAL) and 439–489 (GVDR…RNIC). The tract at residues 364 to 489 (DIDEDFATVL…ALIMAARNIC (126 aa)) is 2 X 51 AA approximate repeats.

This sequence belongs to the NusA family. In terms of assembly, monomer. Binds directly to the core enzyme of the DNA-dependent RNA polymerase and to nascent RNA.

The protein localises to the cytoplasm. In terms of biological role, participates in both transcription termination and antitermination. The chain is Transcription termination/antitermination protein NusA from Shigella flexneri.